A 481-amino-acid polypeptide reads, in one-letter code: WASH complex subunit 1 (481 aa).

Residues methionine 1 to serine 54 form a required for WASH complex assembly region. Disordered stretches follow at residues serine 273–aspartate 417 and arginine 429–alanine 481. Over residues alanine 304–methionine 341 the composition is skewed to pro residues. A VCA region spans residues lysine 359–alanine 481. In terms of domain architecture, WH2 spans glycine 371–valine 393. The span at asparagine 392–glutamate 407 shows a compositional bias: basic and acidic residues.

This sequence belongs to the WASH1 family. Component of the WASH complex.

It is found in the early endosome membrane. The protein localises to the recycling endosome membrane. Acts as a nucleation-promoting factor at the surface of endosomes, where it recruits and activates the Arp2/3 complex to induce actin polymerization, playing a key role in the fission of tubules that serve as transport intermediates during endosome sorting. The chain is WASH complex subunit 1 from Danio rerio (Zebrafish).